A 286-amino-acid polypeptide reads, in one-letter code: Beta-lactamase TEM (286 aa).

Residues 1–23 (MSIQHFRVALIPFFAAFCLPVFA) form the signal peptide. S68 acts as the Acyl-ester intermediate in catalysis. C75 and C121 form a disulfide bridge. E166 (proton acceptor) is an active-site residue. 232-234 (KSG) provides a ligand contact to substrate.

It belongs to the class-A beta-lactamase family.

It carries out the reaction a beta-lactam + H2O = a substituted beta-amino acid. TEM-type are the most prevalent beta-lactamases in enterobacteria; they hydrolyze the beta-lactam bond in susceptible beta-lactam antibiotics, thus conferring resistance to penicillins and cephalosporins. TEM-3 and TEM-4 are capable of hydrolyzing cefotaxime and ceftazidime. TEM-5 is capable of hydrolyzing ceftazidime. TEM-6 is capable of hydrolyzing ceftazidime and aztreonam. TEM-8/CAZ-2, TEM-16/CAZ-7 and TEM-24/CAZ-6 are markedly active against ceftazidime. IRT-4 shows resistance to beta-lactamase inhibitors. This Escherichia coli protein is Beta-lactamase TEM (bla).